A 92-amino-acid chain; its full sequence is YcgL domain-containing protein ASA_2166 (92 aa).

A YcgL domain is found at 1 to 85 (MLCAVYKSRK…PPENLLEQHK (85 aa)).

This is YcgL domain-containing protein ASA_2166 from Aeromonas salmonicida (strain A449).